Here is a 400-residue protein sequence, read N- to C-terminus: MLSNSQGQSPPVPFPAPAPPPQPPTPALPHPPAQPPPPPPQQFPQFHVKSGLQIKKNAIIDDYKVTSQVLGLGINGKVLQIFNKRTQEKFALKMLQDCPKARREVELHWRASQCPHIVRIVDVYENLYAGRKCLLIVMECLDGGELFSRIQDRGDQAFTEREASEIMKSIGEAIQYLHSINIAHRDVKPENLLYTSKRPNAILKLTDFGFAKETTSHNSLTTPCYTPYYVAPEVLGPEKYDKSCDMWSLGVIMYILLCGYPPFYSNHGLAISPGMKTRIRMGQYEFPNPEWSEVSEEVKMLIRNLLKTEPTQRMTITEFMNHPWIMQSTKVPQTPLHTSRVLKEDKERWEDVKEEMTSALATMRVDYEQIKIKKIEDASNPLLLKRRKKARALEAAALAH.

Positions 1–43 are disordered; that stretch reads MLSNSQGQSPPVPFPAPAPPPQPPTPALPHPPAQPPPPPPQQF. Serine 9 carries the post-translational modification Phosphoserine. Over residues 10 to 42 the composition is skewed to pro residues; it reads PPVPFPAPAPPPQPPTPALPHPPAQPPPPPPQQ. Threonine 25 bears the Phosphothreonine mark. Residues 64–325 form the Protein kinase domain; it reads KVTSQVLGLG…ITEFMNHPWI (262 aa). Residues 70-78 and lysine 93 contribute to the ATP site; that span reads LGLGINGKV. 139-141 contacts staurosporine; the sequence is ECL. The Proton acceptor role is filled by aspartate 186. Threonine 222 carries the post-translational modification Phosphothreonine; by MAPK14. Serine 272 carries the phosphoserine; by MAPK14 modification. Serine 328 is subject to Phosphoserine; by autocatalysis. The segment at 328 to 364 is autoinhibitory helix; the sequence is STKVPQTPLHTSRVLKEDKERWEDVKEEMTSALATMR. Threonine 334 carries the phosphothreonine; by MAPK14 modification. Lysine 353 is covalently cross-linked (Glycyl lysine isopeptide (Lys-Gly) (interchain with G-Cter in SUMO)). Residues 356–365 carry the Nuclear export signal (NES) motif; the sequence is MTSALATMRV. Positions 366-390 are p38 MAPK-binding site; sequence DYEQIKIKKIEDASNPLLLKRRKKA. Short sequence motifs (bipartite nuclear localization signal) lie at residues 371-374 and 385-389; these read KIKK and KRRKK.

It belongs to the protein kinase superfamily. CAMK Ser/Thr protein kinase family. In terms of assembly, heterodimer with p38-alpha/MAPK14; this heterodimer forms a stable complex: molecules are positioned 'face to face' so that the ATP-binding sites of both kinases are at the heterodimer interface. Interacts with PHC2. Interacts with HSF1. In terms of processing, sumoylation inhibits the protein kinase activity. Post-translationally, phosphorylated and activated by MAP kinase p38-alpha/MAPK14 at Thr-222, Ser-272 and Thr-334. As to expression, expressed in all tissues examined.

The protein localises to the cytoplasm. It is found in the nucleus. The enzyme catalyses L-seryl-[protein] + ATP = O-phospho-L-seryl-[protein] + ADP + H(+). The catalysed reaction is L-threonyl-[protein] + ATP = O-phospho-L-threonyl-[protein] + ADP + H(+). With respect to regulation, activated following phosphorylation by p38-alpha/MAPK14 following various stresses. Inhibited following sumoylation. Specifically inhibited by pyrrolopyridine inhibitors. Its function is as follows. Stress-activated serine/threonine-protein kinase involved in cytokine production, endocytosis, reorganization of the cytoskeleton, cell migration, cell cycle control, chromatin remodeling, DNA damage response and transcriptional regulation. Following stress, it is phosphorylated and activated by MAP kinase p38-alpha/MAPK14, leading to phosphorylation of substrates. Phosphorylates serine in the peptide sequence, Hyd-X-R-X(2)-S, where Hyd is a large hydrophobic residue. Phosphorylates ALOX5, CDC25B, CDC25C, CEP131, ELAVL1, HNRNPA0, HSP27/HSPB1, KRT18, KRT20, LIMK1, LSP1, PABPC1, PARN, PDE4A, RCSD1, RPS6KA3, TAB3 and TTP/ZFP36. Phosphorylates HSF1; leading to the interaction with HSP90 proteins and inhibiting HSF1 homotrimerization, DNA-binding and transactivation activities. Mediates phosphorylation of HSP27/HSPB1 in response to stress, leading to the dissociation of HSP27/HSPB1 from large small heat-shock protein (sHsps) oligomers and impairment of their chaperone activities and ability to protect against oxidative stress effectively. Involved in inflammatory response by regulating tumor necrosis factor (TNF) and IL6 production post-transcriptionally: acts by phosphorylating AU-rich elements (AREs)-binding proteins ELAVL1, HNRNPA0, PABPC1 and TTP/ZFP36, leading to the regulation of the stability and translation of TNF and IL6 mRNAs. Phosphorylation of TTP/ZFP36, a major post-transcriptional regulator of TNF, promotes its binding to 14-3-3 proteins and reduces its ARE mRNA affinity, leading to inhibition of dependent degradation of ARE-containing transcripts. Phosphorylates CEP131 in response to cellular stress induced by ultraviolet irradiation which promotes binding of CEP131 to 14-3-3 proteins and inhibits formation of novel centriolar satellites. Also involved in late G2/M checkpoint following DNA damage through a process of post-transcriptional mRNA stabilization: following DNA damage, relocalizes from nucleus to cytoplasm and phosphorylates HNRNPA0 and PARN, leading to stabilization of GADD45A mRNA. Involved in toll-like receptor signaling pathway (TLR) in dendritic cells: required for acute TLR-induced macropinocytosis by phosphorylating and activating RPS6KA3. The sequence is that of MAP kinase-activated protein kinase 2 (MAPKAPK2) from Homo sapiens (Human).